The chain runs to 196 residues: Probable malonic semialdehyde reductase RutE (196 aa).

This sequence belongs to the nitroreductase family. HadB/RutE subfamily. FMN serves as cofactor.

The enzyme catalyses 3-hydroxypropanoate + NADP(+) = 3-oxopropanoate + NADPH + H(+). Functionally, may reduce toxic product malonic semialdehyde to 3-hydroxypropionic acid, which is excreted. The protein is Probable malonic semialdehyde reductase RutE of Klebsiella pneumoniae (strain 342).